Reading from the N-terminus, the 326-residue chain is Cyclin-dependent kinase 6 (326 aa).

Position 1 is an N-acetylmethionine (M1). Phosphotyrosine is present on residues Y13 and Y24. The region spanning 13-300 is the Protein kinase domain; that stretch reads YECVAEIGEG…AYGALNHPYF (288 aa). Residues 19-27 and K43 contribute to the ATP site; that span reads IGEGAYGKV. Phosphothreonine is present on residues T49 and T70. The Proton acceptor role is filled by D145. Phosphothreonine is present on T177. K264 is modified (N6-acetyllysine). Phosphoserine is present on S319. Residue T325 is modified to Phosphothreonine.

It belongs to the protein kinase superfamily. CMGC Ser/Thr protein kinase family. CDC2/CDKX subfamily. As to quaternary structure, interaction with D-type G1 cyclins. Cyclin binding promotes enzyme activation by phosphorylation at Thr-177. Binds to RUNX1, CDKN2D, FBXO7 and CDKN2C/p18-INK4c. Forms a cytoplasmic complex with Hsp90/HSP90AB1 and CDC37. FBXO7-binding promotes D-type cyclin binding. Thr-177 phosphorylation and Tyr-24 dephosphorylation promotes kinase activity. As to expression, expressed in subgranular zone (SGZ) of the hippocampal dentate gyrus (DG) and the subventricular zone (SVZ) of the lateral ventricles whose neural precursor cells (NPC) give rise to dentate granule neurons and olfactory bulb (OB) interneurons, respectively. Expressed in the neuroepithelium of the cerebral cortex of the developing brain.

The protein resides in the cytoplasm. It localises to the nucleus. Its subcellular location is the cell projection. It is found in the ruffle. The protein localises to the cytoskeleton. The protein resides in the microtubule organizing center. It localises to the centrosome. It catalyses the reaction L-seryl-[protein] + ATP = O-phospho-L-seryl-[protein] + ADP + H(+). The catalysed reaction is L-threonyl-[protein] + ATP = O-phospho-L-threonyl-[protein] + ADP + H(+). Its activity is regulated as follows. Activated by Thr-177 phosphorylation and Tyr-24 dephosphorylation. Rapidly down-regulated prior to cell differentiation (e.g. erythroid and osteoblast). Serine/threonine-protein kinase involved in the control of the cell cycle and differentiation; promotes G1/S transition. Phosphorylates pRB/RB1 and NPM1. Interacts with D-type G1 cyclins during interphase at G1 to form a pRB/RB1 kinase and controls the entrance into the cell cycle. Involved in initiation and maintenance of cell cycle exit during cell differentiation; prevents cell proliferation and negatively regulates cell differentiation, but is required for the proliferation of specific cell types (e.g. erythroid and hematopoietic cells). Essential for cell proliferation within the dentate gyrus of the hippocampus and the subventricular zone of the lateral ventricles. Required during thymocyte development. Promotes the production of newborn neurons, probably by modulating G1 length. Promotes, at least in astrocytes, changes in patterns of gene expression, changes in the actin cytoskeleton including loss of stress fibers, and enhanced motility during cell differentiation. Prevents myeloid differentiation by interfering with RUNX1 and reducing its transcription transactivation activity, but promotes proliferation of normal myeloid progenitors. Delays senescence. Promotes the proliferation of beta-cells in pancreatic islets of Langerhans. May play a role in the centrosome organization during the cell cycle phases. The sequence is that of Cyclin-dependent kinase 6 (Cdk6) from Mus musculus (Mouse).